Consider the following 278-residue polypeptide: SLAM family member 8 (278 aa).

Positions 1–20 (MWSLWSLLLFEALLPVVVVS) are cleaved as a signal peptide. Over 21–231 (VQVLSKVGDS…AASGKASYKD (211 aa)) the chain is Extracellular. N-linked (GlcNAc...) asparagine glycosylation is found at Asn-83 and Asn-154. Residues 126-213 (PEVQVFTAAA…PVSWDMTTVT (88 aa)) form the Ig-like C2-type domain. Cys-150 and Cys-199 form a disulfide bridge. A helical membrane pass occupies residues 232–252 (VLLVVVPITLFLILAGLFGAW). Topologically, residues 253–278 (HHGLCSGKKKDACTDGVLPETENALV) are cytoplasmic.

The protein resides in the membrane. Its function is as follows. May play a role in B-lineage commitment and/or modulation of signaling through the B-cell receptor. This is SLAM family member 8 (Slamf8) from Mus musculus (Mouse).